The primary structure comprises 201 residues: Small ribosomal subunit protein eS1 (201 aa).

Belongs to the eukaryotic ribosomal protein eS1 family.

The protein is Small ribosomal subunit protein eS1 of Methanoregula boonei (strain DSM 21154 / JCM 14090 / 6A8).